Consider the following 242-residue polypeptide: Carboxy-S-adenosyl-L-methionine synthase (242 aa).

S-adenosyl-L-methionine is bound by residues Tyr39, 64–66 (GCS), 89–90 (DN), 117–118 (DI), Asn132, and Arg199.

It belongs to the class I-like SAM-binding methyltransferase superfamily. Cx-SAM synthase family. Homodimer.

The enzyme catalyses prephenate + S-adenosyl-L-methionine = carboxy-S-adenosyl-L-methionine + 3-phenylpyruvate + H2O. In terms of biological role, catalyzes the conversion of S-adenosyl-L-methionine (SAM) to carboxy-S-adenosyl-L-methionine (Cx-SAM). This is Carboxy-S-adenosyl-L-methionine synthase from Aliivibrio fischeri (strain ATCC 700601 / ES114) (Vibrio fischeri).